Here is a 3082-residue protein sequence, read N- to C-terminus: Autotransporter adhesin BadA (3082 aa).

An N-terminal signal peptide occupies residues 1–47 (MKKLSVTSKRQYNLYASPISRRLSLLMKLSLETVTVMFLLGASPVLA). Residues 48–376 (SNLALTGAKN…DAVNVAQLKA (329 aa)) are binds to host cells. A surface exposed passenger domain region spans residues 48–2901 (SNLALTGAKN…KVQDIATVAD (2854 aa)). The interval 53 to 2850 (TGAKNLSQNS…DARHNGVDSK (2798 aa)) is does not bind host cells, no host proangiogenic cytokine induction, collagen or fibronectin, no autoagglutination. The tract at residues 470–2850 (ITGVAEGTDA…DARHNGVDSK (2381 aa)) is required to bind fibronectin, not required for surface expression on bacteria, bacterial autoagglutination, host cell binding, collagen binding or host proangiogenic cytokine induction. The interval 2902–3027 (SAVKYEKDST…VSNLRYYDIP (126 aa)) is outer membrane translocation of the passenger domain. 4 consecutive transmembrane segments (beta stranded) span residues 3028 to 3039 (GSLSLSFGTGIW), 3044 to 3051 (AFAIGAGY), 3055 to 3065 (DGNIRSNLSIT), and 3070 to 3082 (QWGVGAGITLRLK). A translocator domain region spans residues 3028–3082 (GSLSLSFGTGIWRSQSAFAIGAGYTSEDGNIRSNLSITSSGGQWGVGAGITLRLK).

This sequence belongs to the autotransporter-2 (AT-2) (TC 1.B.40) family. As to quaternary structure, homotrimer. Crystals of the head region form trimers.

The protein resides in the cell surface. The protein localises to the cell outer membrane. Functionally, mediates bacterial adherence to host endothelial cells and host extracellular matrix proteins (collagen type I, III, IV, laminin and fibronectin). Static versus dynamic adherence results differ slightly; in dynamic adherence studies bacteria bind to fixed components under a constant defined flow rate to simulate in vivo infection conditions. Induces secretion of host proangiogenic cytokines such as VEGFA, ADM, IGFBP-3 and IL-8. May prevent bacterial phagocytosis by macrophages. Probably mediates bacterial autoagglutination. Negatively impacts type IV secretion system effectors (VirB/D4 T4SS and its substrate Bep proteins), possibly by preventing close association of host and bacterial cells. This implies the 2 factors are expressed at different times during infection. In Bartonella henselae (Rochalimaea henselae), this protein is Autotransporter adhesin BadA.